Reading from the N-terminus, the 515-residue chain is SWI/SNF-related matrix-associated actin-dependent regulator of chromatin subfamily D member 1 (515 aa).

The interval 1 to 103 (MAARAGFQSV…SGMDQSRKRP (103 aa)) is disordered. A compositionally biased stretch (gly residues) spans 14-23 (GGAGASGGAG). The interaction with ESR1, NR1H4, NR3C1, PGR and SMARCA4 stretch occupies residues 43–167 (APGQGLYRSP…DQTIMRKRLD (125 aa)). Asymmetric dimethylarginine is present on residues Arg-68 and Arg-88. Lys-101 is covalently cross-linked (Glycyl lysine isopeptide (Lys-Gly) (interchain with G-Cter in SUMO2)). The interval 168–474 (IQEALKRPIK…TMTDVVGNPE (307 aa)) is interaction with SMARCC1 and SMARCC2. Residues 180–515 (RKLRIFISNT…LEQALGIRNT (336 aa)) are necessary for GR/NR3C1-mediated remodeling and transcription from chromatin; required for GR/NR3C1 interaction with the BRG1/SMARCA4 complex in vivo. Thr-203 bears the Phosphothreonine mark. Lys-223 carries the N6-acetyllysine modification. The SWIB/MDM2 domain occupies 290 to 367 (YQPPQFKLDP…PQRLHALLMP (78 aa)). Positions 412–440 (ASQQEIATLDNKIHETIETINQLKTQREF) form a coiled coil.

The protein belongs to the SMARCD family. As to quaternary structure, component of the multiprotein chromatin-remodeling complexes SWI/SNF: SWI/SNF-A (BAF), SWI/SNF-B (PBAF) and related complexes. The canonical complex contains a catalytic subunit (either SMARCA4/BRG1/BAF190A or SMARCA2/BRM/BAF190B), and at least SMARCE1, ACTL6A/BAF53, SMARCC1/BAF155, SMARCC2/BAF170, and SMARCB1/SNF5/BAF47. Other subunits specific to each of the complexes may also be present permitting several possible combinations developmentally and tissue specific. Component of the BAF complex, which includes at least actin (ACTB), ARID1A/BAF250A, ARID1B/BAF250B, SMARCA2/BRM, SMARCA4/BRG1/BAF190A, ACTL6A/BAF53, ACTL6B/BAF53B, SMARCE1/BAF57, SMARCC1/BAF155, SMARCC2/BAF170, SMARCB1/SNF5/INI1, and one or more SMARCD1/BAF60A, SMARCD2/BAF60B, or SMARCD3/BAF60C. In muscle cells, the BAF complex also contains DPF3. Component of neural progenitors-specific chromatin remodeling complex (npBAF complex) composed of at least, ARID1A/BAF250A or ARID1B/BAF250B, SMARCD1/BAF60A, SMARCD3/BAF60C, SMARCA2/BRM/BAF190B, SMARCA4/BRG1/BAF190A, SMARCB1/BAF47, SMARCC1/BAF155, SMARCE1/BAF57, SMARCC2/BAF170, PHF10/BAF45A, ACTL6A/BAF53A and actin. Component of neuron-specific chromatin remodeling complex (nBAF complex) composed of at least, ARID1A/BAF250A or ARID1B/BAF250B, SMARCD1/BAF60A, SMARCD3/BAF60C, SMARCA2/BRM/BAF190B, SMARCA4/BRG1/BAF190A, SMARCB1/BAF47, SMARCC1/BAF155, SMARCE1/BAF57, SMARCC2/BAF170, DPF1/BAF45B, DPF3/BAF45C, ACTL6B/BAF53B and actin. Component of the SWI/SNF-B (PBAF) chromatin remodeling complex, at least composed of SMARCA4/BRG1, SMARCB1/BAF47/SNF5, ACTL6A/BAF53A or ACTL6B/BAF53B, SMARCE1/BAF57, SMARCD1/BAF60A, SMARCD2/BAF60B, perhaps SMARCD3/BAF60C, SMARCC1/BAF155, SMARCC2/BAF170, PBRM1/BAF180, ARID2/BAF200 and actin (ACTB). Component of SWI/SNF (GBAF) subcomplex, which includes at least BICRA or BICRAL (mutually exclusive), BRD9, SS18, SMARCA2/BRM, SMARCA4/BRG1/BAF190A, ACTL6A/BAF53, SMARCC1/BAF155, and SMARCD1/BAF60A. Specifically interacts with the VDR heterodimer complex. Interacts with ESR1, NR3C1, NR1H4, PGR, SMARCA4, SMARCC1 and SMARCC2. Interacts with DPF2. Interacts with DPF3a (isoform 2 of DPF3/BAF45C) and with HDGFL2 in a DPF3a-dependent manner. Interacts with FOS, FOSB isoform 1 and 2, FOSL1 and FOSL2. As to expression, expressed in all tissues tested, including brain, heart, kidney, liver, lung, muscle, pancreas and placenta.

The protein resides in the nucleus. In terms of biological role, involved in transcriptional activation and repression of select genes by chromatin remodeling (alteration of DNA-nucleosome topology). Component of SWI/SNF chromatin remodeling complexes that carry out key enzymatic activities, changing chromatin structure by altering DNA-histone contacts within a nucleosome in an ATP-dependent manner. Belongs to the neural progenitors-specific chromatin remodeling complex (npBAF complex) and the neuron-specific chromatin remodeling complex (nBAF complex). During neural development a switch from a stem/progenitor to a postmitotic chromatin remodeling mechanism occurs as neurons exit the cell cycle and become committed to their adult state. The transition from proliferating neural stem/progenitor cells to postmitotic neurons requires a switch in subunit composition of the npBAF and nBAF complexes. As neural progenitors exit mitosis and differentiate into neurons, npBAF complexes which contain ACTL6A/BAF53A and PHF10/BAF45A, are exchanged for homologous alternative ACTL6B/BAF53B and DPF1/BAF45B or DPF3/BAF45C subunits in neuron-specific complexes (nBAF). The npBAF complex is essential for the self-renewal/proliferative capacity of the multipotent neural stem cells. The nBAF complex along with CREST plays a role regulating the activity of genes essential for dendrite growth. Has a strong influence on vitamin D-mediated transcriptional activity from an enhancer vitamin D receptor element (VDRE). May be a link between mammalian SWI-SNF-like chromatin remodeling complexes and the vitamin D receptor (VDR) heterodimer. Mediates critical interactions between nuclear receptors and the BRG1/SMARCA4 chromatin-remodeling complex for transactivation. Interacts with AKIRIN2. The sequence is that of SWI/SNF-related matrix-associated actin-dependent regulator of chromatin subfamily D member 1 from Homo sapiens (Human).